A 296-amino-acid polypeptide reads, in one-letter code: Ribosomal RNA small subunit methyltransferase H (296 aa).

S-adenosyl-L-methionine contacts are provided by residues 30–32, D49, F76, D97, and Q104; that span reads GGH.

The protein belongs to the methyltransferase superfamily. RsmH family.

The protein localises to the cytoplasm. The enzyme catalyses cytidine(1402) in 16S rRNA + S-adenosyl-L-methionine = N(4)-methylcytidine(1402) in 16S rRNA + S-adenosyl-L-homocysteine + H(+). In terms of biological role, specifically methylates the N4 position of cytidine in position 1402 (C1402) of 16S rRNA. The sequence is that of Ribosomal RNA small subunit methyltransferase H from Mesomycoplasma hyopneumoniae (strain 7448) (Mycoplasma hyopneumoniae).